The primary structure comprises 521 residues: Bifunctional purine biosynthesis protein PurH (521 aa).

The 147-residue stretch at 1-147 folds into the MGS-like domain; sequence MAKITRALIS…KNNADVTVVV (147 aa).

This sequence belongs to the PurH family.

It catalyses the reaction (6R)-10-formyltetrahydrofolate + 5-amino-1-(5-phospho-beta-D-ribosyl)imidazole-4-carboxamide = 5-formamido-1-(5-phospho-D-ribosyl)imidazole-4-carboxamide + (6S)-5,6,7,8-tetrahydrofolate. It carries out the reaction IMP + H2O = 5-formamido-1-(5-phospho-D-ribosyl)imidazole-4-carboxamide. The protein operates within purine metabolism; IMP biosynthesis via de novo pathway; 5-formamido-1-(5-phospho-D-ribosyl)imidazole-4-carboxamide from 5-amino-1-(5-phospho-D-ribosyl)imidazole-4-carboxamide (10-formyl THF route): step 1/1. It participates in purine metabolism; IMP biosynthesis via de novo pathway; IMP from 5-formamido-1-(5-phospho-D-ribosyl)imidazole-4-carboxamide: step 1/1. In Geotalea uraniireducens (strain Rf4) (Geobacter uraniireducens), this protein is Bifunctional purine biosynthesis protein PurH.